Consider the following 437-residue polypeptide: Alpha-galactosidase 3 (437 aa).

The first 30 residues, 1-30 (MVIMKKMKDSVLFLVVGLFSLSVLVSQSIA), serve as a signal peptide directing secretion. Intrachain disulfides connect Cys-85–Cys-117 and Cys-165–Cys-195. Asn-88 carries an N-linked (GlcNAc...) asparagine glycan. Residues 115–116 (DD) and Lys-191 each bind substrate. Residue Asp-193 is the Nucleophile of the active site. The N-linked (GlcNAc...) asparagine glycan is linked to Asn-214. Residues 226-230 (EWGVD), Arg-244, and Asp-248 each bind substrate. Residue Asp-248 is the Proton donor of the active site. Asn-250, Asn-315, and Asn-408 each carry an N-linked (GlcNAc...) asparagine glycan.

It belongs to the glycosyl hydrolase 27 family. As to quaternary structure, homodimer.

Its subcellular location is the secreted. It localises to the cell wall. The protein resides in the extracellular space. It is found in the apoplast. The protein localises to the vacuole. It catalyses the reaction Hydrolysis of terminal, non-reducing alpha-D-galactose residues in alpha-D-galactosides, including galactose oligosaccharides, galactomannans and galactolipids.. Functionally, may regulate leaf (and possibly other organ) development by functioning in cell wall loosening and cell wall expansion. This Arabidopsis thaliana (Mouse-ear cress) protein is Alpha-galactosidase 3.